The primary structure comprises 224 residues: Probable proteasome subunit beta type-4 (224 aa).

The protein belongs to the peptidase T1B family. As to quaternary structure, the 26S proteasome consists of a 20S proteasome core and two 19S regulatory subunits. The 20S proteasome core is composed of 28 subunits that are arranged in four stacked rings, resulting in a barrel-shaped structure. The two end rings are each formed by seven alpha subunits, and the two central rings are each formed by seven beta subunits. The catalytic chamber with the active sites is on the inside of the barrel.

It localises to the cytoplasm. The protein localises to the nucleus. Its function is as follows. Non-catalytic component of the proteasome, a multicatalytic proteinase complex which is characterized by its ability to cleave peptides with Arg, Phe, Tyr, Leu, and Glu adjacent to the leaving group at neutral or slightly basic pH. The proteasome has an ATP-dependent proteolytic activity. In Cryptococcus neoformans var. neoformans serotype D (strain B-3501A) (Filobasidiella neoformans), this protein is Probable proteasome subunit beta type-4 (CPR1).